Here is a 217-residue protein sequence, read N- to C-terminus: Probable GTP-binding protein EngB (217 aa).

The region spanning 29 to 213 is the EngB-type G domain; the sequence is GPLEVAFAGR…RQAIGETVGV (185 aa). Residues 37-44, 64-68, 91-94, 158-161, and 192-194 each bind GTP; these read GRSNVGKS, GRTQE, DMPG, TKTD, and TSS. The Mg(2+) site is built by Ser-44 and Thr-66.

This sequence belongs to the TRAFAC class TrmE-Era-EngA-EngB-Septin-like GTPase superfamily. EngB GTPase family. Mg(2+) serves as cofactor.

Functionally, necessary for normal cell division and for the maintenance of normal septation. This Rhizobium leguminosarum bv. trifolii (strain WSM2304) protein is Probable GTP-binding protein EngB.